The sequence spans 184 residues: Inosine triphosphate pyrophosphatase (184 aa).

9–14 (TSNASK) is an ITP binding site. A Mg(2+)-binding site is contributed by Glu38. Residues Lys50, 66 to 67 (DT), Lys83, 142 to 145 (FGWD), Lys163, and 168 to 169 (HR) contribute to the ITP site.

It belongs to the HAM1 NTPase family. In terms of assembly, homodimer. Mg(2+) is required as a cofactor. It depends on Mn(2+) as a cofactor.

The protein localises to the cytoplasm. Its subcellular location is the nucleus. It catalyses the reaction ITP + H2O = IMP + diphosphate + H(+). The catalysed reaction is dITP + H2O = dIMP + diphosphate + H(+). It carries out the reaction XTP + H2O = XMP + diphosphate + H(+). In terms of biological role, pyrophosphatase that hydrolyzes non-canonical purine nucleotides such as inosine triphosphate (ITP), deoxyinosine triphosphate (dITP) or xanthosine 5'-triphosphate (XTP) to their respective monophosphate derivatives. The enzyme does not distinguish between the deoxy- and ribose forms. Probably excludes non-canonical purines from RNA and DNA precursor pools, thus preventing their incorporation into RNA and DNA and avoiding chromosomal lesions. The protein is Inosine triphosphate pyrophosphatase of Tuber melanosporum (strain Mel28) (Perigord black truffle).